The chain runs to 307 residues: Ribonuclease Z (307 aa).

Zn(2+)-binding residues include His63, His65, Asp67, His68, His141, Asp212, and His270. Asp67 serves as the catalytic Proton acceptor.

This sequence belongs to the RNase Z family. As to quaternary structure, homodimer. Zn(2+) serves as cofactor.

The catalysed reaction is Endonucleolytic cleavage of RNA, removing extra 3' nucleotides from tRNA precursor, generating 3' termini of tRNAs. A 3'-hydroxy group is left at the tRNA terminus and a 5'-phosphoryl group is left at the trailer molecule.. In terms of biological role, zinc phosphodiesterase, which displays some tRNA 3'-processing endonuclease activity. Probably involved in tRNA maturation, by removing a 3'-trailer from precursor tRNA. In Bacillus thuringiensis subsp. konkukian (strain 97-27), this protein is Ribonuclease Z.